A 546-amino-acid polypeptide reads, in one-letter code: Chaperonin GroEL (546 aa).

Residues 29–32 (TMGP), lysine 50, 86–90 (DGTTT), glycine 414, and aspartate 492 contribute to the ATP site.

Belongs to the chaperonin (HSP60) family. In terms of assembly, forms a cylinder of 14 subunits composed of two heptameric rings stacked back-to-back. Interacts with the co-chaperonin GroES.

It localises to the cytoplasm. It carries out the reaction ATP + H2O + a folded polypeptide = ADP + phosphate + an unfolded polypeptide.. Functionally, together with its co-chaperonin GroES, plays an essential role in assisting protein folding. The GroEL-GroES system forms a nano-cage that allows encapsulation of the non-native substrate proteins and provides a physical environment optimized to promote and accelerate protein folding. This is Chaperonin GroEL from Helicobacter acinonychis (strain Sheeba).